A 181-amino-acid chain; its full sequence is Ubiquitin-like protein 4B (181 aa).

One can recognise a Ubiquitin-like domain in the interval 1 to 76 (MWLTVKLLLG…LNVIIRPLEK (76 aa)). The segment at 139 to 181 (PEGKHSGATGSTRESKGDMEPRRNMKCNLAHKDGFKREKSPGK) is disordered. Basic and acidic residues-rich tracts occupy residues 151 to 161 (RESKGDMEPRR) and 168 to 181 (AHKD…SPGK).

The protein localises to the cytoplasm. The sequence is that of Ubiquitin-like protein 4B (UBL4B) from Monodelphis domestica (Gray short-tailed opossum).